We begin with the raw amino-acid sequence, 274 residues long: Triosephosphate isomerase (274 aa).

Residue 31 to 33 participates in substrate binding; it reads NWK. Catalysis depends on H118, which acts as the Electrophile. E188 (proton acceptor) is an active-site residue. Residues G194, S234, and 255–256 each bind substrate; that span reads GG.

It belongs to the triosephosphate isomerase family. As to quaternary structure, homodimer.

The protein localises to the cytoplasm. The catalysed reaction is D-glyceraldehyde 3-phosphate = dihydroxyacetone phosphate. It functions in the pathway carbohydrate biosynthesis; gluconeogenesis. Its pathway is carbohydrate degradation; glycolysis; D-glyceraldehyde 3-phosphate from glycerone phosphate: step 1/1. Its function is as follows. Involved in the gluconeogenesis. Catalyzes stereospecifically the conversion of dihydroxyacetone phosphate (DHAP) to D-glyceraldehyde-3-phosphate (G3P). In Chlamydia trachomatis serovar D (strain ATCC VR-885 / DSM 19411 / UW-3/Cx), this protein is Triosephosphate isomerase.